We begin with the raw amino-acid sequence, 433 residues long: Glutamate-1-semialdehyde 2,1-aminomutase (433 aa).

K266 bears the N6-(pyridoxal phosphate)lysine mark.

This sequence belongs to the class-III pyridoxal-phosphate-dependent aminotransferase family. HemL subfamily. In terms of assembly, homodimer. The cofactor is pyridoxal 5'-phosphate.

Its subcellular location is the cytoplasm. It catalyses the reaction (S)-4-amino-5-oxopentanoate = 5-aminolevulinate. Its pathway is porphyrin-containing compound metabolism; protoporphyrin-IX biosynthesis; 5-aminolevulinate from L-glutamyl-tRNA(Glu): step 2/2. This Psychrobacter cryohalolentis (strain ATCC BAA-1226 / DSM 17306 / VKM B-2378 / K5) protein is Glutamate-1-semialdehyde 2,1-aminomutase.